Reading from the N-terminus, the 224-residue chain is Glycerol-3-phosphate acyltransferase (224 aa).

The next 6 membrane-spanning stretches (helical) occupy residues 4-24, 60-80, 88-108, 124-144, 149-169, and 182-202; these read FVIV…GSIN, LVIF…VYFV, SVVV…FPIW, IISV…LIII, IVSF…FIPW, and WPWW…IWSH.

It belongs to the PlsY family. In terms of assembly, probably interacts with PlsX.

The protein resides in the cell membrane. It catalyses the reaction an acyl phosphate + sn-glycerol 3-phosphate = a 1-acyl-sn-glycero-3-phosphate + phosphate. It functions in the pathway lipid metabolism; phospholipid metabolism. Catalyzes the transfer of an acyl group from acyl-phosphate (acyl-PO(4)) to glycerol-3-phosphate (G3P) to form lysophosphatidic acid (LPA). This enzyme utilizes acyl-phosphate as fatty acyl donor, but not acyl-CoA or acyl-ACP. The protein is Glycerol-3-phosphate acyltransferase of Mycoplasmopsis pulmonis (strain UAB CTIP) (Mycoplasma pulmonis).